The chain runs to 633 residues: MRRPKKYEAGEATQYISRRAALRKLQLSLNDFRRLCILKGVYPREPKHRRRAQKGSSDIKILYHAKDIRFLLHEPIVWTLRDYKIFAKKSGRDRAIKDFRNLKRRLAMFPEIKLDHIVKERYPTFIDALKDLDDCLTLLFLFSTFPSLHLIPREQSNLCRRLTIEFLHYVIASKSLRKVFISIKGYYFQAEIKGQKVTWIVPHYYPFKPQSRQEVDFKVMSIFVEFYTIMLGFTNFRLYHGLNLAYPPQFPSNMLQDNADTLKDESSFVSDRITALNFELLRTDKVQEDEEEPDIDMELLEQDGDSKRIIKMKQEAQEVSRLRTLFKGLKFFINREVPREPLVIIIRSFGGKVSWDSSVFSGATYDESDETITHQIVDRPSLSTQYISRDYIQPQWIFDCVNQRQLLPTNKYFLGEPLPPHLSPFVDAKRDTYIPPEEKALHDPSLIETHAQSEDESEDDAAAEEEDTVEQELLDAQLQRAYQQETAEYKKYGGADGVNEDEEDSDEEDFDGEEQESDDDDEEELDEKEKRLLEEKQKMSVQSGKVHKVNKRQVHKAEVDEHRLQARMVKPRHRNLFRKLIREKQAKEKEEWLLRKKRRTIETDAKEAKKLAKREARKAAAAAAAAAAQLGAK.

Residues Arg321–Leu414 form the BRCT domain. Disordered regions lie at residues His450–Glu470 and Lys490–Arg567. A phosphoserine mark is found at Ser453 and Ser457. Acidic residues-rich tracts occupy residues Glu454 to Glu470 and Val498 to Asp526. The segment covering Glu527 to Lys538 has biased composition (basic and acidic residues). Positions Lys545–Val554 are enriched in basic residues. Positions His555–Leu564 are enriched in basic and acidic residues. Positions Leu593–Ala626 form a coiled coil.

This sequence belongs to the pescadillo family.

The protein localises to the nucleus. It is found in the nucleolus. Its subcellular location is the nucleoplasm. Required for maturation of ribosomal RNAs and formation of the large ribosomal subunit. In Drosophila virilis (Fruit fly), this protein is Pescadillo homolog.